A 411-amino-acid polypeptide reads, in one-letter code: Methylthioribose-1-phosphate isomerase (411 aa).

Ser-2 carries the post-translational modification N-acetylserine. Residue Asp-280 is the Proton donor of the active site. A Phosphoserine modification is found at Ser-351.

It belongs to the eIF-2B alpha/beta/delta subunits family. MtnA subfamily. In terms of assembly, homodimer.

It localises to the cytoplasm. The protein resides in the nucleus. It catalyses the reaction 5-(methylsulfanyl)-alpha-D-ribose 1-phosphate = 5-(methylsulfanyl)-D-ribulose 1-phosphate. It participates in amino-acid biosynthesis; L-methionine biosynthesis via salvage pathway; L-methionine from S-methyl-5-thio-alpha-D-ribose 1-phosphate: step 1/6. Catalyzes the interconversion of methylthioribose-1-phosphate (MTR-1-P) into methylthioribulose-1-phosphate (MTRu-1-P). This is Methylthioribose-1-phosphate isomerase from Saccharomyces cerevisiae (strain JAY291) (Baker's yeast).